The sequence spans 288 residues: UDP-3-O-acyl-N-acetylglucosamine deacetylase (288 aa).

Zn(2+)-binding residues include His79, His236, and Asp240. His263 acts as the Proton donor in catalysis.

This sequence belongs to the LpxC family. The cofactor is Zn(2+).

The enzyme catalyses a UDP-3-O-[(3R)-3-hydroxyacyl]-N-acetyl-alpha-D-glucosamine + H2O = a UDP-3-O-[(3R)-3-hydroxyacyl]-alpha-D-glucosamine + acetate. It participates in glycolipid biosynthesis; lipid IV(A) biosynthesis; lipid IV(A) from (3R)-3-hydroxytetradecanoyl-[acyl-carrier-protein] and UDP-N-acetyl-alpha-D-glucosamine: step 2/6. Its function is as follows. Catalyzes the hydrolysis of UDP-3-O-myristoyl-N-acetylglucosamine to form UDP-3-O-myristoylglucosamine and acetate, the committed step in lipid A biosynthesis. The chain is UDP-3-O-acyl-N-acetylglucosamine deacetylase from Rickettsia africae (strain ESF-5).